The primary structure comprises 143 residues: Antiholin-like protein LrgA (143 aa).

Transmembrane regions (helical) follow at residues 6 to 26, 30 to 50, 61 to 81, and 97 to 117; these read VYSF…SNII, LPIP…LLCL, LGTA…ISVI, and VIVV…QFIL.

Belongs to the CidA/LrgA family. LrgA subfamily.

The protein resides in the cell membrane. Its function is as follows. Inhibits the expression or activity of extracellular murein hydrolases by interacting, possibly with LrgB, with the holin-like protein CidA. The LrgAB and CidA proteins may affect the proton motive force of the membrane. May be involved in programmed cell death (PCD), possibly triggering PCD in response to antibiotics and environmental stresses. In Bacillus cereus (strain AH820), this protein is Antiholin-like protein LrgA.